Reading from the N-terminus, the 458-residue chain is Estrogen-related receptor gamma (458 aa).

K40 participates in a covalent cross-link: Glycyl lysine isopeptide (Lys-Gly) (interchain with G-Cter in SUMO). The span at 42–52 (EPSSPASLTDS) shows a compositional bias: polar residues. Residues 42–85 (EPSSPASLTDSVNHHSPGGSSDASGSYSSTMNGHQNGLDSPPLY) form a disordered region. Residue S45 is modified to Phosphoserine. Low complexity predominate over residues 57-70 (SPGGSSDASGSYSS). Positions 125–200 (KRLCLVCGDI…VGMLKEGVRL (76 aa)) form a DNA-binding region, nuclear receptor. 2 consecutive NR C4-type zinc fingers follow at residues 128–148 (CLVCGDIASGYHYGVASCEAC) and 164–188 (CPATNECEITKRRRKSCQACRFMKC). The NR LBD domain maps to 233 to 457 (PYNKIVSHLL…KLFLEMLEAK (225 aa)).

It belongs to the nuclear hormone receptor family. NR3 subfamily. As to quaternary structure, homodimer. Binds TLE1, PNRC1 and PNRC2. Binds GRIP1. Interacts with NRIP1, NCOA1 and NCOR2. In terms of processing, acetylated by PCAF/KAT2 (in vitro). Post-translationally, sumoylation on Lys-40 is enhanced by phosphorylation at Ser-45 and represses transcriptional activity. Phosphorylation on Ser-45 enhances sumoylation on Lys-40 thus repressing transcriptional activity. In terms of tissue distribution, expressed in the heart, kidney, brain, lung, bone marrow, adrenal gland, trachea, spinal cord and thyroid gland.

The protein localises to the nucleus. In terms of biological role, orphan receptor that acts as a transcription activator in the absence of bound ligand. Binds specifically to an estrogen response element and activates reporter genes controlled by estrogen response elements. Induces the expression of PERM1 in the skeletal muscle. This Homo sapiens (Human) protein is Estrogen-related receptor gamma (ESRRG).